Consider the following 67-residue polypeptide: MKAKDLRERTTEHLRELEKSLAAGLFEARFKNFTNRLNDTATIRKAKRDLARVKTILTQRARAEEKA.

It belongs to the universal ribosomal protein uL29 family.

This Sorangium cellulosum (strain So ce56) (Polyangium cellulosum (strain So ce56)) protein is Large ribosomal subunit protein uL29.